The sequence spans 948 residues: Phosphoenolpyruvate carboxylase (948 aa).

Residues His-138 and Lys-610 contribute to the active site.

This sequence belongs to the PEPCase type 1 family. Mg(2+) serves as cofactor.

The catalysed reaction is oxaloacetate + phosphate = phosphoenolpyruvate + hydrogencarbonate. In terms of biological role, forms oxaloacetate, a four-carbon dicarboxylic acid source for the tricarboxylic acid cycle. This is Phosphoenolpyruvate carboxylase from Streptococcus sanguinis (strain SK36).